Reading from the N-terminus, the 49-residue chain is Large ribosomal subunit protein eL40 (49 aa).

Belongs to the eukaryotic ribosomal protein eL40 family.

The polypeptide is Large ribosomal subunit protein eL40 (Methanococcoides burtonii (strain DSM 6242 / NBRC 107633 / OCM 468 / ACE-M)).